We begin with the raw amino-acid sequence, 218 residues long: Glutathione S-transferase Y1 (218 aa).

The GST N-terminal domain maps to 2–88 (PMILGYWNVR…YIARKHNLCG (87 aa)). Glutathione-binding positions include 7–8 (YW), 46–50 (WLNEK), 59–60 (NL), and 72–73 (QS). The GST C-terminal domain occupies 90-208 (TEEERIRVDI…KTSRFLRRPI (119 aa)). Residue Y116 coordinates substrate.

It belongs to the GST superfamily. Mu family. In terms of assembly, homodimer.

The protein resides in the cytoplasm. It catalyses the reaction RX + glutathione = an S-substituted glutathione + a halide anion + H(+). In terms of biological role, conjugation of reduced glutathione to a wide number of exogenous and endogenous hydrophobic electrophiles. The polypeptide is Glutathione S-transferase Y1 (Cricetulus longicaudatus (Long-tailed dwarf hamster)).